The sequence spans 997 residues: Glutamate [NMDA] receptor subunit 1 (997 aa).

The first 26 residues, 1-26 (MAMAEFVFCRPLFGLAIVLLVAPIDA), serve as a signal peptide directing secretion. At 27 to 573 (AQRHTASDNP…TLVSFLQPFS (547 aa)) the chain is on the extracellular side. Residues asparagine 258, asparagine 314, asparagine 345, asparagine 397, asparagine 454, asparagine 481, and asparagine 501 are each glycosylated (N-linked (GlcNAc...) asparagine). Residues 530 to 532 (PLT) and arginine 537 contribute to the glycine site. A helical transmembrane segment spans residues 574–594 (NTLWILVMVSVHVVALVLYLL). Over 595–651 (DRFSPFGRFKLSHSDSNEEKALNLSSAVWFAWGVLLNSGIGEGTPRSFSARVLGMVW) the chain is Cytoplasmic. The helical transmembrane segment at 652–672 (AGFAMIIVASYTANLAAFLVL) threads the bilayer. At 673-831 (ERPKTKLSGI…KTPNTLGLKN (159 aa)) the chain is on the extracellular side. Residue asparagine 693 is glycosylated (N-linked (GlcNAc...) asparagine). Glycine-binding residues include serine 703 and aspartate 747. The helical transmembrane segment at 832–852 (MAGVFILVGVGIAGGVGLIII) threads the bilayer. Over 853–997 (EVIYKKHQVK…YTSDVSHLVV (145 aa)) the chain is Cytoplasmic. A disordered region spans residues 970 to 997 (LGKTRPQQSVLPPRYSPGYTSDVSHLVV). A compositionally biased stretch (polar residues) spans 987-997 (GYTSDVSHLVV).

Belongs to the glutamate-gated ion channel (TC 1.A.10.1) family. As to quaternary structure, forms a heteromeric NMDA channel with Nmdar2. As to expression, highly expressed in adult heads: in the brain and ring gland. Low expression throughout the entire brain is also seen. Higher expression levels were observed in some scattered cell bodies and part of their fibers, including those from several pairs of DPM (dorsal-posterior-medial) neurons surrounding the calyx, DAL (dorsal-anterior-lateral) and DPL (dorsal-posterior-lateral) neurons in the lateral protocerebrum (LP), VAL (ventral-anterior-lateral) neurons in the anterior protocerebrum, and two pairs of VP (ventral-posterior) neurons in the posterior protocerebrum. Many cell bodies in the optic lobes show preferential expression. Punctuate expression is notably detected in many brain regions including the superior medial protocerebrum. Weakly expressed in the antennal lobes and central complex.

It localises to the cell membrane. The protein resides in the postsynaptic cell membrane. The protein localises to the postsynaptic density. Its function is as follows. NMDA receptor subtype of glutamate-gated ion channels with high calcium permeability and voltage-dependent sensitivity to magnesium. Mediated by glycine. This protein plays a key role in synaptic plasticity, synaptogenesis, excitotoxicity, memory acquisition and learning. It mediates neuronal functions in glutamate neurotransmission. Is involved in the cell surface targeting of NMDA receptors. Plays a role in associative learning and in long-term memory consolidation. In Drosophila melanogaster (Fruit fly), this protein is Glutamate [NMDA] receptor subunit 1.